The sequence spans 128 residues: Hemoglobin subunit beta-1 (128 aa).

One can recognise a Globin domain in the interval 2-128 (HWTAEEKALV…VVDALSKGYH (127 aa)). His51 and His74 together coordinate heme b.

Belongs to the globin family. Hb 1 is a heterotetramer of two alpha and two beta-1 chains. In terms of tissue distribution, red blood cells (at protein level).

Functionally, involved in oxygen transport from gills to the various peripheral tissues. In Somniosus microcephalus (Greenland sleeper shark), this protein is Hemoglobin subunit beta-1.